A 513-amino-acid polypeptide reads, in one-letter code: Xylose import ATP-binding protein XylG (513 aa).

ABC transporter domains are found at residues 5 to 242 and 259 to 505; these read LEMK…VGRE and LRIE…LRSE. Position 37 to 44 (37 to 44) interacts with ATP; sequence GENGSGKS.

Belongs to the ABC transporter superfamily. Xylose importer (TC 3.A.1.2.4) family. The complex is composed of two ATP-binding proteins (XylG), two transmembrane proteins (XylH) and a solute-binding protein (XylF).

It localises to the cell inner membrane. It carries out the reaction D-xylose(out) + ATP + H2O = D-xylose(in) + ADP + phosphate + H(+). Part of the ABC transporter complex XylFGH involved in xylose import. Responsible for energy coupling to the transport system. The sequence is that of Xylose import ATP-binding protein XylG from Shigella flexneri serotype 5b (strain 8401).